The chain runs to 837 residues: Tuftelin-interacting protein 11 (837 aa).

Composition is skewed to basic and acidic residues over residues 1-13 (MSLSHLYRDGEGR) and 50-64 (TYGVWAEHDSDDERP). Disordered stretches follow at residues 1–21 (MSLSHLYRDGEGRVDDDDDER) and 50–136 (TYGV…AGGT). Positions 1–50 (MSLSHLYRDGEGRVDDDDDERENFEITDWDLQNEFNPNRQRHWQTKEEAT) are required for interaction with DHX15. Residues S2, S59, and S98 each carry the phosphoserine modification. Positions 91-102 (EEAELDDSEDEE) are enriched in acidic residues. A compositionally biased stretch (basic and acidic residues) spans 103 to 116 (KPGKQEELPKDLGP). A Phosphoserine modification is found at S144. Residues 149–195 (TKGIGQKLLQKMGYVPGRGLGKNAQGIINPIEAKQRKGKGAVGAYGS) enclose the G-patch domain. A disordered region spans residues 183–236 (QRKGKGAVGAYGSERTTQSLQDFPVVDSEEEAEEEFQKELSQWRKDPSGSKKKP). S210 is modified (phosphoserine). The span at 217 to 231 (EFQKELSQWRKDPSG) shows a compositional bias: basic and acidic residues. Residues 700 to 705 (VKDKFN) carry the Nuclear localization signal motif. Residues 710-734 (IMNRAVSSNVGAYMQPGARENIAYL) are required for nuclear speckle localization.

This sequence belongs to the TFP11/STIP family. Identified in the spliceosome C complex. Found in the Intron Large (IL) complex, a post-mRNA release spliceosomal complex containing the excised intron, U2, U5 and U6 snRNPs, and splicing factors. Interacts with TUFT1. Interacts with DHX15; indicative for a recruitment of DHX15 to the IL complex. Interacts with GCFC2.

The protein resides in the cytoplasm. The protein localises to the nucleus. Involved in pre-mRNA splicing, specifically in spliceosome disassembly during late-stage splicing events. Intron turnover seems to proceed through reactions in two lariat-intron associated complexes termed Intron Large (IL) and Intron Small (IS). In cooperation with DHX15 seems to mediate the transition of the U2, U5 and U6 snRNP-containing IL complex to the snRNP-free IS complex leading to efficient debranching and turnover of excised introns. May play a role in the differentiation of ameloblasts and odontoblasts or in the forming of the enamel extracellular matrix. The sequence is that of Tuftelin-interacting protein 11 (TFIP11) from Oryctolagus cuniculus (Rabbit).